A 307-amino-acid polypeptide reads, in one-letter code: UDP-3-O-acyl-N-acetylglucosamine deacetylase (307 aa).

Residues histidine 80, histidine 239, and aspartate 243 each coordinate Zn(2+). Histidine 266 (proton donor) is an active-site residue.

Belongs to the LpxC family. Zn(2+) serves as cofactor.

It carries out the reaction a UDP-3-O-[(3R)-3-hydroxyacyl]-N-acetyl-alpha-D-glucosamine + H2O = a UDP-3-O-[(3R)-3-hydroxyacyl]-alpha-D-glucosamine + acetate. Its pathway is glycolipid biosynthesis; lipid IV(A) biosynthesis; lipid IV(A) from (3R)-3-hydroxytetradecanoyl-[acyl-carrier-protein] and UDP-N-acetyl-alpha-D-glucosamine: step 2/6. Functionally, catalyzes the hydrolysis of UDP-3-O-myristoyl-N-acetylglucosamine to form UDP-3-O-myristoylglucosamine and acetate, the committed step in lipid A biosynthesis. In Neisseria meningitidis serogroup C / serotype 2a (strain ATCC 700532 / DSM 15464 / FAM18), this protein is UDP-3-O-acyl-N-acetylglucosamine deacetylase.